We begin with the raw amino-acid sequence, 468 residues long: Aldehyde dehydrogenase family 3 member B1 (468 aa).

The residue at position 1 (M1) is an N-acetylmethionine. NAD(+) is bound at residue 188–193 (GSPRVG). Catalysis depends on residues E210 and C244. C463 carries S-palmitoyl cysteine lipidation. C465 carries the post-translational modification Cysteine methyl ester. C465 is lipidated: S-geranylgeranyl cysteine. A propeptide spans 466-468 (TLL) (removed in mature form).

This sequence belongs to the aldehyde dehydrogenase family. Dually lipidated in the C-terminus; prenylation occurs prior to, and is a prerequisite for palmitoylation. It is also required for activity towards long-chain substrates. In terms of tissue distribution, highest expression in kidney and lung.

Its subcellular location is the cell membrane. The enzyme catalyses an aldehyde + NADP(+) + H2O = a carboxylate + NADPH + 2 H(+). The catalysed reaction is an aldehyde + NAD(+) + H2O = a carboxylate + NADH + 2 H(+). It carries out the reaction a long-chain fatty aldehyde + NAD(+) + H2O = a long-chain fatty acid + NADH + 2 H(+). It catalyses the reaction a medium-chain fatty aldehyde + NAD(+) + H2O = a medium-chain fatty acid + NADH + 2 H(+). The enzyme catalyses octanal + NAD(+) + H2O = octanoate + NADH + 2 H(+). The catalysed reaction is nonanal + NAD(+) + H2O = nonanoate + NADH + 2 H(+). It carries out the reaction hexadecanoate + NADH + 2 H(+) = hexadecanal + NAD(+) + H2O. It catalyses the reaction (2E)-octenal + NAD(+) + H2O = (2E)-octenoate + NADH + 2 H(+). The enzyme catalyses (E)-non-2-enal + NAD(+) + H2O = (E)-non-2-enoate + NADH + 2 H(+). The catalysed reaction is (E)-4-hydroxynon-2-enal + NAD(+) + H2O = (E)-4-hydroxynon-2-enoate + NADH + 2 H(+). It carries out the reaction (2E)-hexadecenal + NAD(+) + H2O = (E)-hexadec-2-enoate + NADH + 2 H(+). It catalyses the reaction benzaldehyde + NAD(+) + H2O = benzoate + NADH + 2 H(+). The enzyme catalyses a medium-chain fatty aldehyde + NADP(+) + H2O = a medium-chain fatty acid + NADPH + 2 H(+). The catalysed reaction is hexanal + NADP(+) + H2O = hexanoate + NADPH + 2 H(+). It carries out the reaction octanal + NADP(+) + H2O = octanoate + NADPH + 2 H(+). It catalyses the reaction nonanal + NADP(+) + H2O = nonanoate + NADPH + 2 H(+). The enzyme catalyses (2E)-octenal + NADP(+) + H2O = (2E)-octenoate + NADPH + 2 H(+). The catalysed reaction is (E)-non-2-enal + NADP(+) + H2O = (E)-non-2-enoate + NADPH + 2 H(+). It carries out the reaction (E)-4-hydroxynon-2-enal + NADP(+) + H2O = (E)-4-hydroxynon-2-enoate + NADPH + 2 H(+). It catalyses the reaction benzaldehyde + NADP(+) + H2O = benzoate + NADPH + 2 H(+). Its pathway is alcohol metabolism; ethanol degradation; acetate from ethanol: step 2/2. Oxidizes medium and long chain saturated and unsaturated fatty aldehydes generated in the plasma membrane into non-toxic fatty acids. May have a protective role against the cytotoxicity induced by lipid peroxidation. Short-chain fatty aldehydes are not good substrates. Can use both NADP(+) and NAD(+) as electron acceptor in vitro, however in vivo preference will depend on their tissue levels. Low activity towards acetaldehyde and 3,4-dihydroxyphenylacetaldehyde. Able to metabolize aromatic aldehydes such as benzaldehyde to their acid form. The sequence is that of Aldehyde dehydrogenase family 3 member B1 (ALDH3B1) from Homo sapiens (Human).